The following is a 187-amino-acid chain: UPF0301 protein LPC_2717 (187 aa).

It belongs to the UPF0301 (AlgH) family.

This is UPF0301 protein LPC_2717 from Legionella pneumophila (strain Corby).